Here is a 389-residue protein sequence, read N- to C-terminus: MTSGSKAHPVPATCTMESPPLHLDMGAARSSVCTELTIMPRPLAKSLQDSIDSNFPIDEGFQSGGEDEDMRRLFCNILPEVSTAAVDAPFHYTSSLPSKGVRDKLIGGLNIWVGASPKALDSVTSVVVDVHNLSLMQDDVEDNSPLRRSRPSTHSIFGIDQTVNSSTCGIVEVLRRSSEMQNPAFLKIVIEELRSLLIGQSLDLLWTHQISTPSVEEYLQMVDGKTGGLFRMASKLMIAQSESSNMNPTDLDALMTLLGRYFQIRDDYMNLTSQEYTKSKGFCEDLDEGKYSLIMIHALENCDHKSRVLLDSMLLERRATGAAGLGHKELILSMMQQTGSLQYAVEILSVLFNEIFELVELIDRRTGKVNKPIRDLLAALEIKKDSPRK.

Residues lysine 99, arginine 102, and histidine 131 each contribute to the isopentenyl diphosphate site. The Mg(2+) site is built by aspartate 138 and aspartate 142. Residue arginine 147 coordinates dimethylallyl diphosphate. Arginine 148 contacts isopentenyl diphosphate.

The protein belongs to the FPP/GGPP synthase family. Requires Mg(2+) as cofactor.

It is found in the cytoplasm. It catalyses the reaction isopentenyl diphosphate + (2E)-geranyl diphosphate = (2E,6E)-farnesyl diphosphate + diphosphate. The enzyme catalyses isopentenyl diphosphate + (2E,6E)-farnesyl diphosphate = (2E,6E,10E)-geranylgeranyl diphosphate + diphosphate. It functions in the pathway isoprenoid biosynthesis; farnesyl diphosphate biosynthesis; farnesyl diphosphate from geranyl diphosphate and isopentenyl diphosphate: step 1/1. The protein operates within isoprenoid biosynthesis; geranylgeranyl diphosphate biosynthesis; geranylgeranyl diphosphate from farnesyl diphosphate and isopentenyl diphosphate: step 1/1. Its function is as follows. Catalyzes the trans-addition of the 2 molecules of isopentenyl diphosphate (IPP) onto geranyl diphosphate (GDP) to form geranylgeranyl pyrophosphate (GGDP). Does not catalyze the conversion of dimethylallyl diphosphate (DMAPP). In Phomopsis amygdali (Fusicoccum amygdali), this protein is Geranylgeranyl pyrophosphate synthase A (GGS-A).